Consider the following 350-residue polypeptide: UDP-3-O-acylglucosamine N-acyltransferase (350 aa).

His251 (proton acceptor) is an active-site residue.

Belongs to the transferase hexapeptide repeat family. LpxD subfamily. Homotrimer.

It carries out the reaction a UDP-3-O-[(3R)-3-hydroxyacyl]-alpha-D-glucosamine + a (3R)-hydroxyacyl-[ACP] = a UDP-2-N,3-O-bis[(3R)-3-hydroxyacyl]-alpha-D-glucosamine + holo-[ACP] + H(+). It functions in the pathway bacterial outer membrane biogenesis; LPS lipid A biosynthesis. In terms of biological role, catalyzes the N-acylation of UDP-3-O-acylglucosamine using 3-hydroxyacyl-ACP as the acyl donor. Is involved in the biosynthesis of lipid A, a phosphorylated glycolipid that anchors the lipopolysaccharide to the outer membrane of the cell. This chain is UDP-3-O-acylglucosamine N-acyltransferase, found in Prochlorococcus marinus (strain NATL2A).